We begin with the raw amino-acid sequence, 53 residues long: Sodium/potassium-transporting ATPase subunit gamma (53 aa).

Residues 16-34 (GGLIFAALAFIVGLVIILS) form a helical membrane-spanning segment.

Belongs to the FXYD family. As to quaternary structure, regulatory subunit of the sodium/potassium-transporting ATPase which is composed of a catalytic alpha subunit, an auxiliary non-catalytic beta subunit and an additional regulatory subunit. In terms of processing, the N-terminus is blocked. As to expression, highest levels expressed in the kidney and spleen. Restricted to the basolateral membrane in renal epithelial cells and varies in its level of expression along the nephron.

It is found in the membrane. In terms of biological role, may be involved in forming the receptor site for cardiac glycoside binding or may modulate the transport function of the sodium ATPase. In Ovis aries (Sheep), this protein is Sodium/potassium-transporting ATPase subunit gamma (FXYD2).